The chain runs to 142 residues: Transcriptional regulator MraZ (142 aa).

SpoVT-AbrB domains are found at residues 5-47 (EYNH…PLGE) and 76-119 (ANEV…SKEK).

Belongs to the MraZ family. As to quaternary structure, forms oligomers.

It localises to the cytoplasm. The protein localises to the nucleoid. This is Transcriptional regulator MraZ from Clostridium acetobutylicum (strain ATCC 824 / DSM 792 / JCM 1419 / IAM 19013 / LMG 5710 / NBRC 13948 / NRRL B-527 / VKM B-1787 / 2291 / W).